The following is a 365-amino-acid chain: DNA replication and repair protein RecF (365 aa).

30 to 37 (GANGQGKT) lines the ATP pocket.

This sequence belongs to the RecF family.

The protein resides in the cytoplasm. Its function is as follows. The RecF protein is involved in DNA metabolism; it is required for DNA replication and normal SOS inducibility. RecF binds preferentially to single-stranded, linear DNA. It also seems to bind ATP. The chain is DNA replication and repair protein RecF from Geobacter sulfurreducens (strain ATCC 51573 / DSM 12127 / PCA).